The chain runs to 353 residues: MEVDTATFVRLHHELLCAHEGPSIISKFDAIKKVKLGTLANQSGGVNNITEAFLAKLRNFERKSEAYLASDLAERELTRDTHKAIVFVTKSVLLGGKSLKDLLPYGVIVCAFIFIPETASVLDNVPVMIGNQKRPLTVALIKYIAKSLNCDLVGDSYDTFYYCNSSAYGKNLISVSDNDFSNPQRALLSVGDLCYQAARSLHVAAANYIRIFDRMPPGFQPSKHLFRIIGVLDMETLKTMVTSNIAREPGMFCHDNVKDVLHRIGVYSPNHHFSAVILWKGWASTYAYMFNQEQLNMLSGTSGLAGDFGKYKLTYGSTFDEGVIHVQYQFVTPEVVRKRNIYPDLSALKGGGS.

This sequence belongs to the phytoreovirus non-structural protein 10 family.

Its function is as follows. Suppressor of RNA-mediated gene silencing, also known as post-transcriptional gene silencing (PTGS), a mechanism of plant viral defense that limits the accumulation of viral RNAs. The protein is Suppressor of RNA-mediated gene silencing of Alopecurus aequalis (Barnyard grass).